A 1397-amino-acid polypeptide reads, in one-letter code: MAKSFTGRKRIRKSFGRIPEVTRMPNLIEVQRSSYDHFLQMDVPPEKRANVGLQEVFRSVFPIKDFSERAVLDFVRYELEQPKYDVEECQQRGMTFAAPLKVTLRLTVFDVDEDTGLRSIRDIKEQDVYMGDMPLMTANGTFIINGTERVIVSQMHRSPGVFFDHDKGKTHSSGKYLFAARVIPYRGSWLDFEFDAKDIVYVRIDRRRKLPATTLLYALDGADSAELRAERRALGKDLLPYEAQGMAKEEILGYFYETITYQRAADGWKTGFDAERMKGQKLLTDLVDARTGEVLASRDTKLTPRLIRKLQDQGLQEIKVAIEDIIGRYLAIDIIDEKTGEVIYEAGDELSATALERLEKMGVEELPVLNVDHLNIGAYIRNTMAADRNASREDALIDIYRVMRPGEPPTLESAEALFAGLFFDQERYDLSAVGRVKMNARLGFETDDQMRVLRKEDILKILKILVELKDGRGEIDDIDHLGNRRVRSVGELMENQYRVGLLRMERAIRERMSSVEIDTVMPHDLINAKPAAAAVREFFGSSQLSQFMDQTNPLSEITHKRRLSALGPGGLTRERAGFEVRDVHPTHYGRICPIETPEGPNIGLINSLATYARVNQYGFIESPYRKVIDGRVTDEVVYLSAMEEGRYTVAEANAPLDAGNRFADPLVSCRKGGEYLLVRPDMIDLIDVSPKQLVSVAAALIPFLENDDANRALMGSNMQRQAVPLIKADSPLVGTGMEATVARDSGVTIVTRRAGIVDQVDATRIVIRATEDTDPAAPGVDIYNLLKFQRSNQNTCINQKPLVKVGDRVQKGDIIADGPSTDLGELALGRNVLVAFMPWNGYNFEDSILISERIVRDDVFTSIHIEEFEVMARDTKLGQEEITRDIPNVGEEALKNLDEAGIVYIGAEVRPGDILVGKVTPKGESPMTPEEKLLRAIFGEKASDVRDTSLRLPPGVAGTVVEVRVFSRRGVDKDERALAIERAEIEKLAKDRDDEKAILERSFYTRLKELLLGQTSVSGPKGMKGGETITDETLAGLTRGQWRHISVENDQVMEIIEQTGKVFDDSVQRLQERFENKVEKLQRGDELPPGVMKMVKVFVAVKRKLQPGDKMAGRHGNKGVISRITPIEDMPYLEDGRNVDIVLNPLGVPSRMNVGQILETHLGWAAAGIGRQIGEMLDRMRAATVEAADKARTAEDLKERLRSIYGEAVYESDIAPMSEAQLMELAGNLRRGIPFATPVFDGAREDDICRMLEAAGLDRSGQSTLIDGRTGEPFDRRVTVGYIYMLKLHHLVDDKIHARSIGPYSLVTQQPLGGKAQFGGQRFGEMEVWALEAYGAAYTLQEMLTVKSDDVSGRTKVYEAIVRGDDNFEAGIPESFNVLVKELRSLGLNVELNQRTY.

This sequence belongs to the RNA polymerase beta chain family. The RNAP catalytic core consists of 2 alpha, 1 beta, 1 beta' and 1 omega subunit. When a sigma factor is associated with the core the holoenzyme is formed, which can initiate transcription.

The catalysed reaction is RNA(n) + a ribonucleoside 5'-triphosphate = RNA(n+1) + diphosphate. DNA-dependent RNA polymerase catalyzes the transcription of DNA into RNA using the four ribonucleoside triphosphates as substrates. In Rhodospirillum centenum (strain ATCC 51521 / SW), this protein is DNA-directed RNA polymerase subunit beta.